The chain runs to 395 residues: Syncephapepsin (395 aa).

An N-terminal signal peptide occupies residues 1–19 (MKFSLALLATVALATISQA). Residues 20–71 (APVEKQVAGKPFQLVKNPHYQANATRAIFRAEKKYARHTAIPEQGKTIVKSA) constitute a propeptide, activation peptide. The Peptidase A1 domain maps to 89–391 (YYATVSVGTP…NQGVPEVQIA (303 aa)). Asp107 is a catalytic residue. A disulfide bridge connects residues Cys120 and Cys123. The active site involves Asp288. Cys322 and Cys355 are joined by a disulfide.

It belongs to the peptidase A1 family. As to quaternary structure, monomer.

Hydrolysis of proteins with a broad specificity. Residues recognized to be cleaved were primarily those of trypsin and chymotrypsin and Lys was the most susceptible. The protein is Syncephapepsin (SPSR) of Syncephalastrum racemosum (Filamentous fungus).